Consider the following 504-residue polypeptide: Probable cytosol aminopeptidase (504 aa).

K272 and D277 together coordinate Mn(2+). K284 is an active-site residue. D295, D354, and E356 together coordinate Mn(2+). Residue R358 is part of the active site.

The protein belongs to the peptidase M17 family. Mn(2+) is required as a cofactor.

The protein localises to the cytoplasm. The enzyme catalyses Release of an N-terminal amino acid, Xaa-|-Yaa-, in which Xaa is preferably Leu, but may be other amino acids including Pro although not Arg or Lys, and Yaa may be Pro. Amino acid amides and methyl esters are also readily hydrolyzed, but rates on arylamides are exceedingly low.. It catalyses the reaction Release of an N-terminal amino acid, preferentially leucine, but not glutamic or aspartic acids.. Functionally, presumably involved in the processing and regular turnover of intracellular proteins. Catalyzes the removal of unsubstituted N-terminal amino acids from various peptides. This chain is Probable cytosol aminopeptidase, found in Chlorobaculum tepidum (strain ATCC 49652 / DSM 12025 / NBRC 103806 / TLS) (Chlorobium tepidum).